The sequence spans 599 residues: Putative sensor histidine kinase NtrY-like (599 aa).

4 consecutive transmembrane segments (helical) span residues 17–37 (VLIFTLAIAAIIFACATFYVI), 44–64 (FSTIIGFLLVDLAIFLILGVL), 85–105 (IVIAFSLVAAIPTIIVSVFSV), and 285–305 (IMFIFIALLLLFVAISFGVIF). The HAMP domain maps to 307-361 (AKIVKPIKKLVTATDKVKDGDLTVQVPENEVDKDEIGTLYAAFNRMIKQLSRQQR). Residues 378 to 589 (KVAHEIKNPL…IIDIKFDLKK (212 aa)) enclose the Histidine kinase domain. His-381 carries the phosphohistidine; by autocatalysis modification.

The protein resides in the cell membrane. The catalysed reaction is ATP + protein L-histidine = ADP + protein N-phospho-L-histidine.. Its function is as follows. Member of the two-component regulatory system RF_0427/RF_0895. This Rickettsia felis (strain ATCC VR-1525 / URRWXCal2) (Rickettsia azadi) protein is Putative sensor histidine kinase NtrY-like.